A 946-amino-acid polypeptide reads, in one-letter code: MIMHGTWYKGPQLAHHPHSNPHNSSHGHSDYHQFRSYPSFVVTPYHDGHVQGPATPTPCTAPPTPCNGPVPVSVPVSIPVCHTGGQGSPVIVESSFAIAAAAAAAAAAVAVGGSSATPLLPSPPIKIEQVFGEPSSLGAVVEDYALGLDCPVEHTFRKPHNNNGYSWSTGNNNEVVSHSSNGHTNNHPTTPPTPPNEASATQATSVSAINLNQAQPASQTRSNFGSSIKSPPSEPDAVTAATCKSQENNSGQNPTPNSLSDHNPAHNLNSNSTAAAVAAAAAAAAAANMPIGGVQGQNPTQGLVHWMSAVMAEHMTGQTHHDPGAVGMHYMWNGNVDHAKDISDYNLWPPTPRSHQHASEHHPMSLKQEYEAKMNDHHHNNLQKGHFLDDNRLEHHAVTGQGGLGLGASNGVGGGGGGASVVGNSSLGASSHHAVAAAHHHNQAVAAASAAALLVVPQPINASKMGGPGGVSSVAGGHATGGGSGRKYQCKMCPQIFSSKADLQLHTQIHMREAKPYKCTQCSKAFANSSYLSQHTRIHLGIKPYRCEICQRKFTQLSHLQQHIRTHTGDKPYKCRHPGCQKAFSQLSNLQSHSRCHQTDKPFKCNSCYKCFSDEPSLLEHIPKHKESKHLKTHICQYCGKSYTQETYLTKHMQKHAERTDKRPPIVPGSAAAIAAAAAAAAGGSANPANGPPPPPNPAQHQRNNLGLPPVSIAPSDNGYWPKVSPDSAAAANAMEVMHQQQQQQQQQQQQQQQQQQQQQQQAHHHHPQHGVPPQQHVPPQQQQQQQQQQQHHHPQQQPPPQHSMEAHYAQPTAPNGSQSNGHGAELQPHHRMPDPVREDIASTPSAVGPYDAASITKTTSNSAFTPINSMPPHLNSLSHHPMAQRPYLYDAISFPNKNVNQNNANAFPNQLISLHQIRNYAHQPAGLMAGEHLLGVSVGPGKDKG.

2 disordered regions span residues 10–30 and 156–269; these read GPQL…GHSD and FRKP…HNLN. Positions 161-176 are enriched in polar residues; sequence NNNGYSWSTGNNNEVV. The span at 177-188 shows a compositional bias: low complexity; it reads SHSSNGHTNNHP. Polar residues-rich tracts occupy residues 198-230 and 242-269; these read ASAT…SIKS and TCKS…HNLN. 6 consecutive C2H2-type zinc fingers follow at residues 488–510, 517–539, 545–567, 573–597, 603–625, and 634–656; these read YQCK…TQIH, YKCT…TRIH, YRCE…IRTH, YKCR…SRCH, FKCN…IPKH, and HICQ…MQKH. Positions 683–853 are disordered; it reads GGSANPANGP…TPSAVGPYDA (171 aa). 2 stretches are compositionally biased toward low complexity: residues 739 to 762 and 770 to 790; these read HQQQ…QQQQ and HGVP…QQQQ. Positions 813 to 822 are enriched in polar residues; the sequence is TAPNGSQSNG. Over residues 828-841 the composition is skewed to basic and acidic residues; that stretch reads QPHHRMPDPVREDI.

The protein belongs to the krueppel C2H2-type zinc-finger protein family. In terms of assembly, interacts with nab; which acts as a corepressor. In terms of tissue distribution, isoform rn and isoform roe are expressed in non-overlapping domains in the larval imaginal disks. Isoform rn is first expressed during the early third larval instar in the leg, wing, haltere and antennal part of the eye-antennal imaginal disk. It is observed as a ring in the leg and antenna disks and in the presumptive wing pouch and capitellum of wing and haltere disks respectively. In wing disk it is expressed in 3 concentric domains in the wing pouch. In late third instar, expression of isoform rn in the leg disk is no longer evident, but is maintained in the other disks. Isoform roe appears in the third instar and is confined to the eye part of the eye-antennal imaginal disk in a band of 4-6 cells at the morphogenetic furrow. There is no evidence of roe expression in other imaginal disks.

Its subcellular location is the nucleus. Functionally, transcription factor involved in imaginal disks development. Isoform rn is required in the wings, antenna, haltere, proboscis and legs disks, while isoform roe is required in the eye disk. Together with nab corepressor, it is involved in the initiation and maintenance of wingless (wg) expression in the wing hinge, by limiting the expression of wg to this compartment. Also required for the epithelial-mesenchymal transition branch of basolateral junctions signaling. This Drosophila melanogaster (Fruit fly) protein is Zinc finger protein rotund.